Reading from the N-terminus, the 110-residue chain is Large ribosomal subunit protein uL22 (110 aa).

It belongs to the universal ribosomal protein uL22 family. As to quaternary structure, part of the 50S ribosomal subunit.

Its function is as follows. This protein binds specifically to 23S rRNA; its binding is stimulated by other ribosomal proteins, e.g. L4, L17, and L20. It is important during the early stages of 50S assembly. It makes multiple contacts with different domains of the 23S rRNA in the assembled 50S subunit and ribosome. Functionally, the globular domain of the protein is located near the polypeptide exit tunnel on the outside of the subunit, while an extended beta-hairpin is found that lines the wall of the exit tunnel in the center of the 70S ribosome. This Photobacterium profundum (strain SS9) protein is Large ribosomal subunit protein uL22.